Reading from the N-terminus, the 679-residue chain is Glycine--tRNA ligase beta subunit (679 aa).

Belongs to the class-II aminoacyl-tRNA synthetase family. Tetramer of two alpha and two beta subunits.

The protein resides in the cytoplasm. The enzyme catalyses tRNA(Gly) + glycine + ATP = glycyl-tRNA(Gly) + AMP + diphosphate. The protein is Glycine--tRNA ligase beta subunit of Streptococcus uberis (strain ATCC BAA-854 / 0140J).